The chain runs to 214 residues: Probable transaldolase (214 aa).

The active-site Schiff-base intermediate with substrate is Lys-83.

The protein belongs to the transaldolase family. Type 3B subfamily.

Its subcellular location is the cytoplasm. The catalysed reaction is D-sedoheptulose 7-phosphate + D-glyceraldehyde 3-phosphate = D-erythrose 4-phosphate + beta-D-fructose 6-phosphate. It participates in carbohydrate degradation; pentose phosphate pathway; D-glyceraldehyde 3-phosphate and beta-D-fructose 6-phosphate from D-ribose 5-phosphate and D-xylulose 5-phosphate (non-oxidative stage): step 2/3. In terms of biological role, transaldolase is important for the balance of metabolites in the pentose-phosphate pathway. The polypeptide is Probable transaldolase (Streptococcus equi subsp. zooepidemicus (strain H70)).